Consider the following 91-residue polypeptide: Small ribosomal subunit protein uS19 (91 aa).

Belongs to the universal ribosomal protein uS19 family.

In terms of biological role, protein S19 forms a complex with S13 that binds strongly to the 16S ribosomal RNA. This is Small ribosomal subunit protein uS19 from Synechococcus elongatus (strain ATCC 33912 / PCC 7942 / FACHB-805) (Anacystis nidulans R2).